Here is a 228-residue protein sequence, read N- to C-terminus: Ribulose-phosphate 3-epimerase (228 aa).

Ser-9 contacts substrate. A divalent metal cation-binding residues include His-34, Asp-36, and His-70. Residue Asp-36 is the Proton acceptor of the active site. Substrate contacts are provided by residues His-70, 146-149, 175-177, and 197-198; these read GKGG, DGG, and GT. Asp-175 lines the a divalent metal cation pocket. Asp-175 (proton donor) is an active-site residue.

Belongs to the ribulose-phosphate 3-epimerase family. Co(2+) is required as a cofactor. Fe(2+) serves as cofactor. Requires Mn(2+) as cofactor. It depends on Zn(2+) as a cofactor.

The catalysed reaction is D-ribulose 5-phosphate = D-xylulose 5-phosphate. Its pathway is carbohydrate degradation; pentose phosphate pathway; D-xylulose 5-phosphate from D-ribulose 5-phosphate (non-oxidative stage): step 1/1. Its function is as follows. Catalyzes the reversible epimerization of D-ribulose 5-phosphate to D-xylulose 5-phosphate. The sequence is that of Ribulose-phosphate 3-epimerase from Schizosaccharomyces pombe (strain 972 / ATCC 24843) (Fission yeast).